The sequence spans 166 residues: Transcription antitermination protein NusB (166 aa).

The segment covering 1–15 has biased composition (basic and acidic residues); it reads MISDDSDRFNPRDPK. A disordered region spans residues 1–30; the sequence is MISDDSDRFNPRDPKPANAGKPSKSAKRRE.

The protein belongs to the NusB family.

In terms of biological role, involved in transcription antitermination. Required for transcription of ribosomal RNA (rRNA) genes. Binds specifically to the boxA antiterminator sequence of the ribosomal RNA (rrn) operons. In Pseudomonas fluorescens (strain ATCC BAA-477 / NRRL B-23932 / Pf-5), this protein is Transcription antitermination protein NusB.